A 232-amino-acid polypeptide reads, in one-letter code: Ribonuclease 3 (232 aa).

The RNase III domain occupies 5-134 (KKALLEQFDL…FLGALLLDKG (130 aa)). E47 contributes to the Mg(2+) binding site. Residue D51 is part of the active site. Mg(2+) is bound by residues D120 and E123. E123 is an active-site residue. The region spanning 160–229 (DYKTKLQELL…AKNAFEKESS (70 aa)) is the DRBM domain. A disordered region spans residues 203 to 232 (KSGQGQGRSKKLAEQEAAKNAFEKESSSCF). The span at 213-232 (KLAEQEAAKNAFEKESSSCF) shows a compositional bias: basic and acidic residues.

It belongs to the ribonuclease III family. As to quaternary structure, homodimer. Requires Mg(2+) as cofactor.

The protein localises to the cytoplasm. It catalyses the reaction Endonucleolytic cleavage to 5'-phosphomonoester.. In terms of biological role, digests double-stranded RNA. Involved in the processing of primary rRNA transcript to yield the immediate precursors to the large and small rRNAs (23S and 16S). Processes some mRNAs, and tRNAs when they are encoded in the rRNA operon. Processes pre-crRNA and tracrRNA of type II CRISPR loci if present in the organism. The sequence is that of Ribonuclease 3 from Streptococcus sanguinis (strain SK36).